A 254-amino-acid polypeptide reads, in one-letter code: 14-3-3-like protein RA215 (254 aa).

It belongs to the 14-3-3 family.

This is 14-3-3-like protein RA215 from Solanum tuberosum (Potato).